The primary structure comprises 181 residues: Putative J domain-containing protein R266 (181 aa).

The 65-residue stretch at 6–70 folds into the J domain; that stretch reads NYYQILDVDN…LKRLNYDSYL (65 aa).

The polypeptide is Putative J domain-containing protein R266 (Acanthamoeba polyphaga (Amoeba)).